Consider the following 283-residue polypeptide: Thymidylate synthase (283 aa).

Arg22 is a binding site for dUMP. Catalysis depends on Cys160, which acts as the Nucleophile. DUMP-binding positions include 180–183 (RSCD), Asn191, and 221–223 (HIY). Residue Asp183 participates in (6R)-5,10-methylene-5,6,7,8-tetrahydrofolate binding. (6R)-5,10-methylene-5,6,7,8-tetrahydrofolate is bound at residue Ser282.

The protein belongs to the thymidylate synthase family. Bacterial-type ThyA subfamily. Homodimer.

It is found in the cytoplasm. The catalysed reaction is dUMP + (6R)-5,10-methylene-5,6,7,8-tetrahydrofolate = 7,8-dihydrofolate + dTMP. It functions in the pathway pyrimidine metabolism; dTTP biosynthesis. Functionally, catalyzes the reductive methylation of 2'-deoxyuridine-5'-monophosphate (dUMP) to 2'-deoxythymidine-5'-monophosphate (dTMP) while utilizing 5,10-methylenetetrahydrofolate (mTHF) as the methyl donor and reductant in the reaction, yielding dihydrofolate (DHF) as a by-product. This enzymatic reaction provides an intracellular de novo source of dTMP, an essential precursor for DNA biosynthesis. This Marinomonas sp. (strain MWYL1) protein is Thymidylate synthase.